The sequence spans 297 residues: Iron/alpha-ketoglutarate-dependent dioxygenase ausU (297 aa).

Fe cation-binding residues include histidine 130, aspartate 132, and histidine 206.

It belongs to the PhyH family. Homodimer. Fe cation serves as cofactor.

It functions in the pathway secondary metabolite biosynthesis; terpenoid biosynthesis. Iron/alpha-ketoglutarate-dependent dioxygenase; part of the gene cluster that mediates the biosynthesis of calidodehydroaustin, a fungal meroterpenoid. The first step of the pathway is the synthesis of 3,5-dimethylorsellinic acid by the polyketide synthase ausA. 3,5-dimethylorsellinic acid is then prenylated by the polyprenyl transferase ausN. Further epoxidation by the FAD-dependent monooxygenase ausM and cyclization by the probable terpene cyclase ausL lead to the formation of protoaustinoid A. Protoaustinoid A is then oxidized to spiro-lactone preaustinoid A3 by the combined action of the FAD-binding monooxygenases ausB and ausC, and the dioxygenase ausE. Acid-catalyzed keto-rearrangement and ring contraction of the tetraketide portion of preaustinoid A3 by ausJ lead to the formation of preaustinoid A4. The aldo-keto reductase ausK, with the help of ausH, is involved in the next step by transforming preaustinoid A4 into isoaustinone which is in turn hydroxylated by the P450 monooxygenase ausI to form austinolide. The cytochrome P450 monooxygenase ausG modifies austinolide to austinol. Austinol is further acetylated to austin by the O-acetyltransferase ausP, which spontaneously changes to dehydroaustin. The cytochrome P450 monooxygenase ausR then converts dehydroaustin is into 7-dehydrodehydroaustin. The hydroxylation catalyzed by ausR permits the O-acetyltransferase ausQ to add an additional acetyl group to the molecule, leading to the formation of acetoxydehydroaustin. The short chain dehydrogenase ausT catalyzes the reduction of the double bond present between carbon atoms 1 and 2 to convert 7-dehydrodehydroaustin into 1,2-dihydro-7-hydroxydehydroaustin. AusQ catalyzes not only an acetylation reaction but also the addition of the PKS ausV diketide product to 1,2-dihydro-7-hydroxydehydroaustin, forming precalidodehydroaustin. Finally, the iron/alpha-ketoglutarate-dependent dioxygenase converts precalidodehydroaustin into calidodehydroaustin. The protein is Iron/alpha-ketoglutarate-dependent dioxygenase ausU of Aspergillus calidoustus.